Consider the following 249-residue polypeptide: Ubiquinone/menaquinone biosynthesis C-methyltransferase UbiE (249 aa).

S-adenosyl-L-methionine is bound by residues threonine 74, aspartate 93, and 121-122; that span reads DA.

Belongs to the class I-like SAM-binding methyltransferase superfamily. MenG/UbiE family.

It catalyses the reaction a 2-demethylmenaquinol + S-adenosyl-L-methionine = a menaquinol + S-adenosyl-L-homocysteine + H(+). The enzyme catalyses a 2-methoxy-6-(all-trans-polyprenyl)benzene-1,4-diol + S-adenosyl-L-methionine = a 5-methoxy-2-methyl-3-(all-trans-polyprenyl)benzene-1,4-diol + S-adenosyl-L-homocysteine + H(+). It functions in the pathway quinol/quinone metabolism; menaquinone biosynthesis; menaquinol from 1,4-dihydroxy-2-naphthoate: step 2/2. It participates in cofactor biosynthesis; ubiquinone biosynthesis. Methyltransferase required for the conversion of demethylmenaquinol (DMKH2) to menaquinol (MKH2) and the conversion of 2-polyprenyl-6-methoxy-1,4-benzoquinol (DDMQH2) to 2-polyprenyl-3-methyl-6-methoxy-1,4-benzoquinol (DMQH2). The chain is Ubiquinone/menaquinone biosynthesis C-methyltransferase UbiE from Acidiphilium cryptum (strain JF-5).